Consider the following 282-residue polypeptide: Phospholipid phosphatase 1 (282 aa).

Topologically, residues 1–6 (MFDKPR) are cytoplasmic. Positions 5–7 (PRL) match the PDZ-binding; involved in localization to the apical cell membrane motif. Residues 7–27 (LPYVVLDVICVLLAGLPFIIL) form a helical membrane-spanning segment. At 28-53 (TSRHTPFQRGVFCTDESIKYPYREDT) the chain is on the extracellular side. The helical transmembrane segment at 54–74 (IPYALLGGIVIPFCIIVMITG) threads the bilayer. Residues 75 to 88 (ETLSVYFNVLHSNS) are Cytoplasmic-facing. The chain crosses the membrane as a helical span at residues 89–109 (FVSNHYIATIYKAVGAFLFGA). Topologically, residues 110–164 (SASQSLTDIAKYSIGRLRPHFLAVCNPDWSKINCSDGYIENFVCQGNEQKVREGR) are extracellular. Positions 120–128 (KYSIGRLRP) are phosphatase sequence motif I. N-linked (GlcNAc...) asparagine glycosylation is present at asparagine 142. A helical membrane pass occupies residues 165–185 (LSFYSGHSSFSMYCMLFVALY). Residues 168–171 (YSGH) form a phosphatase sequence motif II region. The active-site Proton donors is histidine 171. Residues 186–194 (LQARMKGDW) lie on the Cytoplasmic side of the membrane. The chain crosses the membrane as a helical span at residues 195 to 215 (ARLLRPMLQFGLVALSIYVGL). A phosphatase sequence motif III region spans residues 216 to 227 (SRVSDYKHHWSD). Residues 216 to 229 (SRVSDYKHHWSDVL) are Extracellular-facing. The active-site Nucleophile is histidine 223. A helical transmembrane segment spans residues 230-250 (IGLIQGAVVAILVVLYVTDFF). Over 251-282 (KTTESNKERKEDSHTTLHETTNRQSYARNHEP) the chain is Cytoplasmic. The span at 257 to 271 (KERKEDSHTTLHETT) shows a compositional bias: basic and acidic residues. The segment at 257-282 (KERKEDSHTTLHETTNRQSYARNHEP) is disordered. Positions 272–282 (NRQSYARNHEP) are enriched in polar residues.

This sequence belongs to the PA-phosphatase related phosphoesterase family. As to quaternary structure, forms functional homodimers and homooligomers that are not required for substrate recognition and catalytic activity. Can also form heterooligomers with PLPP2 and PLPP3. Post-translationally, N-glycosylated. N-linked sugars are of the complex type. N-glycosylation is not required for the phosphatase activity.

The protein resides in the cell membrane. It is found in the apical cell membrane. Its subcellular location is the membrane raft. The protein localises to the membrane. It localises to the caveola. The enzyme catalyses a 1,2-diacyl-sn-glycero-3-phosphate + H2O = a 1,2-diacyl-sn-glycerol + phosphate. It carries out the reaction 1,2-dihexadecanoyl-sn-glycero-3-phosphate + H2O = 1,2-dihexadecanoyl-sn-glycerol + phosphate. The catalysed reaction is 1,2-di-(9Z-octadecenoyl)-sn-glycero-3-phosphate + H2O = 1,2-di-(9Z-octadecenoyl)-sn-glycerol + phosphate. It catalyses the reaction a monoacyl-sn-glycero-3-phosphate + H2O = a monoacylglycerol + phosphate. The enzyme catalyses (9Z)-octadecenoyl-sn-glycero-3-phosphate + H2O = (9Z-octadecenoyl)-glycerol + phosphate. It carries out the reaction a 1-acyl-sn-glycero-3-phosphate + H2O = a 1-acyl-sn-glycerol + phosphate. The catalysed reaction is 1-(9Z-octadecenoyl)-sn-glycero-3-phosphate + H2O = 1-(9Z-octadecenoyl)-sn-glycerol + phosphate. It catalyses the reaction a 1,2-diacyl-sn-glycerol 3-diphosphate + H2O = a 1,2-diacyl-sn-glycero-3-phosphate + phosphate + H(+). The enzyme catalyses sphing-4-enine 1-phosphate + H2O = sphing-4-enine + phosphate. It carries out the reaction an N-acylsphing-4-enine 1-phosphate + H2O = an N-acylsphing-4-enine + phosphate. The catalysed reaction is N-(octanoyl)-sphing-4-enine-1-phosphate + H2O = N-octanoylsphing-4-enine + phosphate. It catalyses the reaction N-(9Z-octadecenoyl)-ethanolamine phosphate + H2O = N-(9Z-octadecenoyl) ethanolamine + phosphate. The enzyme catalyses 1-hexadecanoyl-2-(9Z-octadecenoyl)-sn-glycero-3-phosphate + H2O = 1-hexadecanoyl-2-(9Z-octadecenoyl)-sn-glycerol + phosphate. Its pathway is lipid metabolism; phospholipid metabolism. With respect to regulation, magnesium-independent phospholipid phosphatase. Insensitive to N-ethylmaleimide. Its function is as follows. Magnesium-independent phospholipid phosphatase of the plasma membrane that catalyzes the dephosphorylation of a variety of glycerolipid and sphingolipid phosphate esters including phosphatidate/PA, lysophosphatidate/LPA, diacylglycerol pyrophosphate/DGPP, sphingosine 1-phosphate/S1P and ceramide 1-phosphate/C1P. Also acts on N-oleoyl ethanolamine phosphate/N-(9Z-octadecenoyl)-ethanolamine phosphate, a potential physiological compound. Through its extracellular phosphatase activity allows both the hydrolysis and the cellular uptake of these bioactive lipid mediators from the milieu, regulating signal transduction in different cellular processes. It is for instance essential for the extracellular hydrolysis of S1P and subsequent conversion into intracellular S1P. Involved in the regulation of inflammation, platelets activation, cell proliferation and migration among other processes. May also have an intracellular activity to regulate phospholipid-mediated signaling pathways. The protein is Phospholipid phosphatase 1 of Rattus norvegicus (Rat).